Consider the following 115-residue polypeptide: MANTILKSTTRHIRIFTARVENNDLIADTSQLTLDIDPDNEFLWEQSTIEKIQSRFKELVECHTGADLTDYTLRRIGTELEGTLFSLLQAGELSYNPNARVLNYSMGLPRTTELS.

The protein belongs to the complex I NdhM subunit family. As to quaternary structure, NDH-1 can be composed of about 15 different subunits; different subcomplexes with different compositions have been identified which probably have different functions.

The protein localises to the plastid. It localises to the organellar chromatophore thylakoid membrane. The catalysed reaction is a plastoquinone + NADH + (n+1) H(+)(in) = a plastoquinol + NAD(+) + n H(+)(out). It catalyses the reaction a plastoquinone + NADPH + (n+1) H(+)(in) = a plastoquinol + NADP(+) + n H(+)(out). NDH-1 shuttles electrons from an unknown electron donor, via FMN and iron-sulfur (Fe-S) centers, to quinones in the respiratory and/or the photosynthetic chain. The immediate electron acceptor for the enzyme in this species is believed to be plastoquinone. Couples the redox reaction to proton translocation, and thus conserves the redox energy in a proton gradient. The protein is NAD(P)H-quinone oxidoreductase subunit M, organellar chromatophore of Paulinella chromatophora.